The chain runs to 119 residues: uncharacterized protein (119 aa).

Positions 86 to 119 (KKQRMKMLTEQEEEEEEEEEEPPKPKKKVINRKK) are disordered. Positions 95 to 106 (EQEEEEEEEEEE) are enriched in acidic residues. The segment covering 110–119 (PKKKVINRKK) has biased composition (basic residues).

This is an uncharacterized protein from Sputnik virophage.